The primary structure comprises 184 residues: Major urinary protein 3 (184 aa).

Positions 1–22 (MKLLLPLLLLLCLELTLVCIHA) are cleaved as a signal peptide. Residue Asn66 is glycosylated (N-linked (GlcNAc...) asparagine). A disulfide bridge connects residues Cys86 and Cys179.

Belongs to the calycin superfamily. Lipocalin family. Post-translationally, glycosylated. In terms of tissue distribution, abundant in the urine of adult male mice but absent from that of females.

It is found in the secreted. Binds pheromones that are released from drying urine of males. These pheromones affect the sexual behavior of females. This is Major urinary protein 3 (Mup3) from Mus musculus (Mouse).